The sequence spans 322 residues: Secretion system apparatus protein SsaQ (322 aa).

Belongs to the FliN/MopA/SpaO family.

In terms of biological role, part of a type III secretion system. The polypeptide is Secretion system apparatus protein SsaQ (ssaQ) (Salmonella typhimurium (strain LT2 / SGSC1412 / ATCC 700720)).